We begin with the raw amino-acid sequence, 294 residues long: S-adenosylmethionine uptake transporter (294 aa).

A run of 10 helical transmembrane segments spans residues 4-24 (ALKTYLTGIGWFLLSLVSSSA), 39-59 (FEVAFFRFFFSSIVLLPFVFY), 74-91 (ILRGLLLFFGMTSWTYGL), 98-118 (TATVVSFSIPLFTLILAVFFL), 121-141 (NIIWQRWVVTVVGFIGLVVTL), 148-168 (FNPEILYFVLAAISFAMLDII), 177-197 (SMISMLFYSAIVTAVVSLPVA), 207-227 (FELALLFVLGSSGSLILFFLL), 237-257 (ATAPYRYLELVISAIAAYFIF), and 260-280 (FPDKSTLHGAVIIIPATLFII). EamA domains lie at 21–141 (SSSA…VVTL) and 160–280 (ISFA…LFII).

Belongs to the drug/metabolite transporter (DMT) superfamily. 10 TMS drug/metabolite exporter (DME) (TC 2.A.7.3) family.

It is found in the cell inner membrane. Transports S-adenosylmethionine. This is S-adenosylmethionine uptake transporter (sam) from Rickettsia felis (strain ATCC VR-1525 / URRWXCal2) (Rickettsia azadi).